Reading from the N-terminus, the 130-residue chain is Mating-type-like protein A1 (130 aa).

Residues 68–127 (TYTTRKPLPAKAKLQLVETFSKKRYLTRCEKHQLAVQCGITTNQVQIWFANRRKRSKDLN) constitute a DNA-binding region (homeobox).

Belongs to the MATA1 family.

The protein resides in the nucleus. Functionally, mating type proteins are sequence specific DNA-binding proteins that act as master switches in yeast differentiation by controlling gene expression in a cell type-specific fashion. In Candida glabrata (strain ATCC 2001 / BCRC 20586 / JCM 3761 / NBRC 0622 / NRRL Y-65 / CBS 138) (Yeast), this protein is Mating-type-like protein A1 (MTL1A1).